The following is a 192-amino-acid chain: Transcription termination/antitermination protein NusG (192 aa).

Positions 140-168 constitute a KOW domain; the sequence is VGEIVIVTDGPFETFTGTVEEIDQEKNRL.

It belongs to the NusG family.

Its function is as follows. Participates in transcription elongation, termination and antitermination. This Rickettsia felis (strain ATCC VR-1525 / URRWXCal2) (Rickettsia azadi) protein is Transcription termination/antitermination protein NusG.